Consider the following 231-residue polypeptide: Large ribosomal subunit protein uL1 (231 aa).

Belongs to the universal ribosomal protein uL1 family. In terms of assembly, part of the 50S ribosomal subunit.

In terms of biological role, binds directly to 23S rRNA. The L1 stalk is quite mobile in the ribosome, and is involved in E site tRNA release. Functionally, protein L1 is also a translational repressor protein, it controls the translation of the L11 operon by binding to its mRNA. This Herminiimonas arsenicoxydans protein is Large ribosomal subunit protein uL1.